A 429-amino-acid polypeptide reads, in one-letter code: Serine hydroxymethyltransferase (429 aa).

(6S)-5,6,7,8-tetrahydrofolate-binding positions include L126 and 130-132 (GHL). K235 is modified (N6-(pyridoxal phosphate)lysine). Residue 359 to 361 (SPF) coordinates (6S)-5,6,7,8-tetrahydrofolate.

It belongs to the SHMT family. As to quaternary structure, homodimer. The cofactor is pyridoxal 5'-phosphate.

Its subcellular location is the cytoplasm. It carries out the reaction (6R)-5,10-methylene-5,6,7,8-tetrahydrofolate + glycine + H2O = (6S)-5,6,7,8-tetrahydrofolate + L-serine. It functions in the pathway one-carbon metabolism; tetrahydrofolate interconversion. Its pathway is amino-acid biosynthesis; glycine biosynthesis; glycine from L-serine: step 1/1. Catalyzes the reversible interconversion of serine and glycine with tetrahydrofolate (THF) serving as the one-carbon carrier. This reaction serves as the major source of one-carbon groups required for the biosynthesis of purines, thymidylate, methionine, and other important biomolecules. Also exhibits THF-independent aldolase activity toward beta-hydroxyamino acids, producing glycine and aldehydes, via a retro-aldol mechanism. The protein is Serine hydroxymethyltransferase of Synechococcus sp. (strain CC9311).